Consider the following 236-residue polypeptide: Pyridoxal phosphate homeostasis protein (236 aa).

Lys-36 is subject to N6-(pyridoxal phosphate)lysine.

It belongs to the pyridoxal phosphate-binding protein YggS/PROSC family.

Functionally, pyridoxal 5'-phosphate (PLP)-binding protein, which is involved in PLP homeostasis. This chain is Pyridoxal phosphate homeostasis protein, found in Vibrio cholerae serotype O1 (strain ATCC 39315 / El Tor Inaba N16961).